Consider the following 375-residue polypeptide: Succinyl-diaminopimelate desuccinylase (375 aa).

Zn(2+) is bound at residue histidine 66. Residue aspartate 68 is part of the active site. Aspartate 99 is a Zn(2+) binding site. The active-site Proton acceptor is the glutamate 133. Zn(2+)-binding residues include glutamate 134, glutamate 162, and histidine 348.

It belongs to the peptidase M20A family. DapE subfamily. As to quaternary structure, homodimer. Zn(2+) is required as a cofactor. Co(2+) serves as cofactor.

It catalyses the reaction N-succinyl-(2S,6S)-2,6-diaminopimelate + H2O = (2S,6S)-2,6-diaminopimelate + succinate. It participates in amino-acid biosynthesis; L-lysine biosynthesis via DAP pathway; LL-2,6-diaminopimelate from (S)-tetrahydrodipicolinate (succinylase route): step 3/3. Functionally, catalyzes the hydrolysis of N-succinyl-L,L-diaminopimelic acid (SDAP), forming succinate and LL-2,6-diaminopimelate (DAP), an intermediate involved in the bacterial biosynthesis of lysine and meso-diaminopimelic acid, an essential component of bacterial cell walls. The protein is Succinyl-diaminopimelate desuccinylase of Salmonella agona (strain SL483).